Consider the following 231-residue polypeptide: AA9 family lytic polysaccharide monooxygenase C (231 aa).

The signal sequence occupies residues 1-18 (MKSGLLFTTASLALTASA). Histidine 19 provides a ligand contact to Cu(2+). The cysteines at positions 60 and 179 are disulfide-linked. N-linked (GlcNAc...) asparagine glycans are attached at residues asparagine 69 and asparagine 143. 2 residues coordinate O2: histidine 165 and glutamine 174. Cu(2+) is bound at residue tyrosine 176.

The protein belongs to the polysaccharide monooxygenase AA9 family. It depends on Cu(2+) as a cofactor.

It localises to the secreted. It carries out the reaction [(1-&gt;4)-beta-D-glucosyl]n+m + reduced acceptor + O2 = 4-dehydro-beta-D-glucosyl-[(1-&gt;4)-beta-D-glucosyl]n-1 + [(1-&gt;4)-beta-D-glucosyl]m + acceptor + H2O.. In terms of biological role, lytic polysaccharide monooxygenase (LPMO) that depolymerizes crystalline and amorphous polysaccharides via the oxidation of scissile alpha- or beta-(1-4)-glycosidic bonds, yielding C1 oxidation products. Catalysis by LPMOs requires the reduction of the active-site copper from Cu(II) to Cu(I) by a reducing agent and H(2)O(2) or O(2) as a cosubstrate. The polypeptide is AA9 family lytic polysaccharide monooxygenase C (Emericella nidulans (strain FGSC A4 / ATCC 38163 / CBS 112.46 / NRRL 194 / M139) (Aspergillus nidulans)).